The sequence spans 239 residues: Purine nucleoside phosphorylase DeoD-type (239 aa).

Residue histidine 5 participates in a purine D-ribonucleoside binding. Phosphate contacts are provided by residues glycine 21, arginine 25, arginine 44, and 88-91; that span reads RVGS. A purine D-ribonucleoside-binding positions include 180 to 182 and 204 to 205; these read EME and SD. Aspartate 205 functions as the Proton donor in the catalytic mechanism.

This sequence belongs to the PNP/UDP phosphorylase family. In terms of assembly, homohexamer; trimer of homodimers.

The catalysed reaction is a purine D-ribonucleoside + phosphate = a purine nucleobase + alpha-D-ribose 1-phosphate. The enzyme catalyses a purine 2'-deoxy-D-ribonucleoside + phosphate = a purine nucleobase + 2-deoxy-alpha-D-ribose 1-phosphate. Its function is as follows. Catalyzes the reversible phosphorolytic breakdown of the N-glycosidic bond in the beta-(deoxy)ribonucleoside molecules, with the formation of the corresponding free purine bases and pentose-1-phosphate. The protein is Purine nucleoside phosphorylase DeoD-type of Erwinia tasmaniensis (strain DSM 17950 / CFBP 7177 / CIP 109463 / NCPPB 4357 / Et1/99).